The following is a 178-amino-acid chain: Protein PilI (178 aa).

The 140-residue stretch at 34-173 (SWSGIGFRMG…PHALAQHQGF (140 aa)) folds into the CheW-like domain.

Its function is as follows. May be a part of a signal-transduction system that regulates twitching motility by controlling pilus function (extension and retraction). The polypeptide is Protein PilI (pilI) (Pseudomonas aeruginosa (strain ATCC 15692 / DSM 22644 / CIP 104116 / JCM 14847 / LMG 12228 / 1C / PRS 101 / PAO1)).